The chain runs to 423 residues: Exodeoxyribonuclease 7 large subunit (423 aa).

It belongs to the XseA family. As to quaternary structure, heterooligomer composed of large and small subunits.

The protein localises to the cytoplasm. It catalyses the reaction Exonucleolytic cleavage in either 5'- to 3'- or 3'- to 5'-direction to yield nucleoside 5'-phosphates.. Its function is as follows. Bidirectionally degrades single-stranded DNA into large acid-insoluble oligonucleotides, which are then degraded further into small acid-soluble oligonucleotides. This chain is Exodeoxyribonuclease 7 large subunit, found in Natranaerobius thermophilus (strain ATCC BAA-1301 / DSM 18059 / JW/NM-WN-LF).